The primary structure comprises 481 residues: MQQSAFLELPKNFYELVLPEPQQNARLVTVNHSLMDELNCDLSDKQLLALASGNLTDESLINFNLIPLAQKYTGHQFGYYNPDLGDGRGLLLGQWHDKNNQAWEFHLKGAGRTPFSRRGDGRAVLRSVIREYLASEALHGLGVPTTRALAIASSQEQVQREIFEPRASLIRVTPTHIRFGHFEWAASLGKDALDALIAFVIQHHYPELAELPENEQAGALLKAVCGRTATLMAKWQAVGFNHGVMNSDNMSIIGETFDFGPYAFFDDFQIEYICNHSDVEGRYAYNQQPKIGVWNCQVLAAAFGQSVTEAEQTAALDHFVQTYNQQYVSEMNAKLGLATQQETDKDLIGDLLVLMDKQRVDFSLFFRRLAKLGHADENDLRRLLSQPEEFEPWFERYHQRVAQEALSEDKRQQRILNNNPSIILRNYIAQQIIEAAEVGNFQPLNDWVKALHSPFENHPGLAEFQQPPTPEQKGLQLSCSS.

Positions 85, 87, 88, 108, 120, 121, 171, and 178 each coordinate ATP. Aspartate 248 serves as the catalytic Proton acceptor. 2 residues coordinate Mg(2+): asparagine 249 and aspartate 258. Aspartate 258 lines the ATP pocket. The interval 458–481 (HPGLAEFQQPPTPEQKGLQLSCSS) is disordered.

This sequence belongs to the SELO family. Mg(2+) serves as cofactor. The cofactor is Mn(2+).

The enzyme catalyses L-seryl-[protein] + ATP = 3-O-(5'-adenylyl)-L-seryl-[protein] + diphosphate. It catalyses the reaction L-threonyl-[protein] + ATP = 3-O-(5'-adenylyl)-L-threonyl-[protein] + diphosphate. The catalysed reaction is L-tyrosyl-[protein] + ATP = O-(5'-adenylyl)-L-tyrosyl-[protein] + diphosphate. It carries out the reaction L-histidyl-[protein] + UTP = N(tele)-(5'-uridylyl)-L-histidyl-[protein] + diphosphate. The enzyme catalyses L-seryl-[protein] + UTP = O-(5'-uridylyl)-L-seryl-[protein] + diphosphate. It catalyses the reaction L-tyrosyl-[protein] + UTP = O-(5'-uridylyl)-L-tyrosyl-[protein] + diphosphate. Functionally, nucleotidyltransferase involved in the post-translational modification of proteins. It can catalyze the addition of adenosine monophosphate (AMP) or uridine monophosphate (UMP) to a protein, resulting in modifications known as AMPylation and UMPylation. This is Protein nucleotidyltransferase YdiU from Hydrogenovibrio crunogenus (strain DSM 25203 / XCL-2) (Thiomicrospira crunogena).